The primary structure comprises 904 residues: MVQVNENEYRLKFFLNNNYNRKICQVCQTPFWTKDKERNVCADIPCTDYYFFDLNIKSPPLTVREARQKFLKFFEKKGHTIIPPKPVLARWREDLYLTIASIVDFQPFVTSGIVPPPANPLVLSQPCIRLEDVDNVGVTFGRHLTTFEMAAHHAFNYPDKQIYWKDETVELSKEFFVEEIGIPEEELNYKESWWEGGGNAGPSFEVTVGGLELATLVFMQYEIKDGNYVPLKLKIVDTGYGVERIAWFTQKTPTAFHAIYGNLVYTFFNKIGAPLVDDELLKTAAILAGRIDPDKPETIKRHREEVAKKLGLDLKYVDQELTRAARVFQVLDHTKTIALMLADGLVPSNSGEGYLGRLLIRRALRVLRLLGSDIKLYELVKEQIEYWKEDFPQLLKNKDYILDVVNLEQERFNETLSKISLTASSLSRRKEISVDDLVKLYDSNGIPPDLLVEEIRKINPEIKVEVPYNFYGLVAKRHQTVPLKDTKKEKLPKDVIDLAENLPPTKKLYYEDQYKRSFTAKVVSVYKNYLVLDQTTFYPEGGGQIGDTGIIKDEKGNTYQVVDTQKVKDVIFHILDKEPSLKEGDEVYGEIDWQRRYRIMKHHTVTHVILSAARKVLGEHVWQAGAEKTPQKGRLDITHYKLPTEEEIKKIEDLANYIINDRRSVRPLIINRTEAEMKYGVSIYAGGVPEGADVRLIEIKDWDIEGCGGTHLSNTSEIGALKIINVEKIQDGVIRLEYVAGDVVAQYARQEEDKLKEISRQLSTSPEQIEVRLKRFLEEYKEKEELLNQYRKMMLQEIENISKKETVNGVTIYIINLFDEELRKEAMRKLTMNQKSIVVNISNKGNNNVVEIATSNDLRVDKIIEALRREGGKGGGKGTYGSITTQLNVDKIVNTIKSTINNGI.

H603, H607, C707, and H711 together coordinate Zn(2+).

This sequence belongs to the class-II aminoacyl-tRNA synthetase family. Zn(2+) serves as cofactor.

The protein localises to the cytoplasm. It catalyses the reaction tRNA(Ala) + L-alanine + ATP = L-alanyl-tRNA(Ala) + AMP + diphosphate. In terms of biological role, catalyzes the attachment of alanine to tRNA(Ala) in a two-step reaction: alanine is first activated by ATP to form Ala-AMP and then transferred to the acceptor end of tRNA(Ala). Also edits incorrectly charged Ser-tRNA(Ala) and Gly-tRNA(Ala) via its editing domain. The sequence is that of Alanine--tRNA ligase from Sulfurisphaera tokodaii (strain DSM 16993 / JCM 10545 / NBRC 100140 / 7) (Sulfolobus tokodaii).